The primary structure comprises 734 residues: E3 ubiquitin-protein ligase TRIM56 (734 aa).

The segment at 21-60 (CKICLEQLHTPKTLPCLHTYCQDCLAQLDIGGQVRCPECR) adopts an RING-type zinc-finger fold. 2 B box-type zinc fingers span residues 98-149 (KPTC…VVDL) and 164-205 (RQAS…CLPL). Residues C169, H172, C192, and H197 each coordinate Zn(2+). Positions 215–303 (GLEELLAGVD…KIERQEQVAK (89 aa)) form a coiled coil. Positions 372-381 (EPKQSPKDSG) are enriched in basic and acidic residues. The interval 372 to 463 (EPKQSPKDSG…SPILRPNLEG (92 aa)) is disordered. Residues 435–448 (RPNKKKKCKGRGKS) show a composition bias toward basic residues. S454 bears the Phosphoserine mark.

It belongs to the TRIM/RBCC family. In terms of assembly, interacts with STING1. Interacts with TICAM1.

The protein resides in the cytoplasm. It carries out the reaction S-ubiquitinyl-[E2 ubiquitin-conjugating enzyme]-L-cysteine + [acceptor protein]-L-lysine = [E2 ubiquitin-conjugating enzyme]-L-cysteine + N(6)-ubiquitinyl-[acceptor protein]-L-lysine.. It participates in protein modification; protein ubiquitination. Its function is as follows. E3 ubiquitin-protein ligase that plays a key role in innate antiviral immunity by mediating ubiquitination of CGAS and STING1. In response to pathogen- and host-derived double-stranded DNA (dsDNA), targets STING1 to 'Lys-63'-linked ubiquitination, thereby promoting its homodimerization, a step required for the production of type I interferon IFN-beta. Also mediates monoubiquitination of CGAS, thereby promoting CGAS oligomerization and subsequent activation. Independently of its E3 ubiquitin ligase activity, positive regulator of TLR3 signaling. Potentiates extracellular double stranded RNA (dsRNA)-induced expression of IFNB1 and interferon-stimulated genes ISG15, IFIT1/ISG56, CXCL10, OASL and CCL5/RANTES. The protein is E3 ubiquitin-protein ligase TRIM56 of Mus musculus (Mouse).